Here is a 286-residue protein sequence, read N- to C-terminus: Beta-lactamase SHV-46 (286 aa).

The first 21 residues, 1 to 21 (MRYIRLCIISLLATLPLAVHA), serve as a signal peptide directing secretion. Ser66 (acyl-ester intermediate) is an active-site residue. A disulfide bridge links Cys73 with Cys119. Glu164 acts as the Proton acceptor in catalysis. Residue 230–232 (KTG) coordinates substrate.

It belongs to the class-A beta-lactamase family.

The catalysed reaction is a beta-lactam + H2O = a substituted beta-amino acid. This chain is Beta-lactamase SHV-46 (bla), found in Klebsiella oxytoca.